A 313-amino-acid polypeptide reads, in one-letter code: Ribosomal RNA small subunit methyltransferase H (313 aa).

Residues 35-37, aspartate 55, phenylalanine 81, aspartate 103, and glutamine 110 each bind S-adenosyl-L-methionine; that span reads GGH.

The protein belongs to the methyltransferase superfamily. RsmH family.

It localises to the cytoplasm. The catalysed reaction is cytidine(1402) in 16S rRNA + S-adenosyl-L-methionine = N(4)-methylcytidine(1402) in 16S rRNA + S-adenosyl-L-homocysteine + H(+). Functionally, specifically methylates the N4 position of cytidine in position 1402 (C1402) of 16S rRNA. The sequence is that of Ribosomal RNA small subunit methyltransferase H from Pseudomonas syringae pv. tomato (strain ATCC BAA-871 / DC3000).